The chain runs to 22 residues: Plasticin-TR (22 aa).

The protein belongs to the frog skin active peptide (FSAP) family. Plasticin subfamily. As to quaternary structure, exhibits a propensity to self-association and forms helical oligomers in membrane-mimetic environments. As to expression, expressed by the skin glands.

The protein localises to the secreted. The protein resides in the target cell membrane. In terms of biological role, has no antimicrobial activity against Gram-negative bacterium E.coli ATCC 25922, Gram-positive bacterium S.epidermidis ATCC 12228 and against fungus C.albicans ATCC 24433 at concentrations up to 100 uM. Has an anti-inflammatory effect, since it inhibits the production of the pro-inflammatory cytokines TNF-alpha and IL-1 beta. Has high activity of stimulation of insulin release, which may protect the species from being eaten by predators by causing fatal hypoglycemia. Is not cytotoxic to cancer line cells. Does not show hemolysis on mouse erythrocytes. Adopts a mixture of alpha-helical and beta-sheet structures. In Phyllomedusa trinitatis (Trinidad leaf frog), this protein is Plasticin-TR.